The sequence spans 200 residues: Phospholipase D (200 aa).

An N-terminal signal peptide occupies residues 1–25 (MKRKNNKFIEISIAFILGIALGLYG). The 28-residue stretch at 142 to 169 (VPGIAHNKVIIIDKKKVITGSFNFTAAA) folds into the PLD phosphodiesterase domain. Residues H147, K149, and D154 contribute to the active site.

It belongs to the phospholipase D family. Homodimer.

It localises to the secreted. The catalysed reaction is a 1,2-diacyl-sn-glycero-3-phosphocholine + H2O = a 1,2-diacyl-sn-glycero-3-phosphate + choline + H(+). In terms of biological role, could be a virulence factor. This is Phospholipase D (pld) from Rickettsia conorii (strain ATCC VR-613 / Malish 7).